A 140-amino-acid chain; its full sequence is Small ribosomal subunit protein uS12 (140 aa).

The residue at position 102 (D102) is a 3-methylthioaspartic acid.

It belongs to the universal ribosomal protein uS12 family. In terms of assembly, part of the 30S ribosomal subunit. Contacts proteins S8 and S17. May interact with IF1 in the 30S initiation complex.

Its function is as follows. With S4 and S5 plays an important role in translational accuracy. Functionally, interacts with and stabilizes bases of the 16S rRNA that are involved in tRNA selection in the A site and with the mRNA backbone. Located at the interface of the 30S and 50S subunits, it traverses the body of the 30S subunit contacting proteins on the other side and probably holding the rRNA structure together. The combined cluster of proteins S8, S12 and S17 appears to hold together the shoulder and platform of the 30S subunit. The chain is Small ribosomal subunit protein uS12 from Geobacillus sp. (strain WCH70).